The sequence spans 153 residues: Nucleoside diphosphate kinase (153 aa).

Residues Lys-13, Phe-61, Arg-89, Thr-95, Arg-106, and Asn-116 each coordinate ATP. Residue His-119 is the Pros-phosphohistidine intermediate of the active site.

The protein belongs to the NDK family. Mg(2+) serves as cofactor. In terms of tissue distribution, highest levels in the liver and kidney with lower levels in the heart, brain and breast muscle.

The protein resides in the cytoplasm. The protein localises to the cell membrane. It catalyses the reaction a 2'-deoxyribonucleoside 5'-diphosphate + ATP = a 2'-deoxyribonucleoside 5'-triphosphate + ADP. The catalysed reaction is a ribonucleoside 5'-diphosphate + ATP = a ribonucleoside 5'-triphosphate + ADP. Major role in the synthesis of nucleoside triphosphates other than ATP. The ATP gamma phosphate is transferred to the NDP beta phosphate via a ping-pong mechanism, using a phosphorylated active-site intermediate. The polypeptide is Nucleoside diphosphate kinase (Columba livia (Rock dove)).